We begin with the raw amino-acid sequence, 316 residues long: MSGDTCLCPASGAKPKISGFKGGGLGNKYVQLNVGGSLYYTTVRALTRHDTMLKAMFSGRMEVLTDKEGWILIDRCGKHFGTILNYLRDDTITLPQSRQEIQELMAEAKYYLIQGLVSTCQTALQDKKDSYQPVCNIPIITSLREEDRLIESSTKPVVKLLYNRSNNKYSYTSNSDDHLLKNIELFDKLSLRFNGRVLFIKDVIGDEICCWSFYGQGRKLAEVCCTSIVYATEKKQTKVEFPEARIYEETLNVLLYETPRVPDNSLLEATSRSRSQASPSEDEDTFELRDRVRRIHVKRYSTYDDRQLGHQSTHRD.

Residues 28–96 (KYVQLNVGGS…LRDDTITLPQ (69 aa)) enclose the BTB domain. A compositionally biased stretch (polar residues) spans 268 to 279 (EATSRSRSQASP). Residues 268–288 (EATSRSRSQASPSEDEDTFEL) form a disordered region. Ser278 bears the Phosphoserine mark. Ser280 is modified (phosphoserine; by CK2).

This sequence belongs to the BACURD family. As to quaternary structure, component of the BCR(TNFAIP1) E3 ubiquitin ligase complex, at least composed of CUL3, TNFAIP1/BACURD2 and RBX1. Interacts with RHOA; with a preference for RhoA-GDP. Interacts with RHOB. Interacts with PCNA. Interacts with CSNK2B. In terms of processing, phosphorylation at Ser-280 by CK2 facilitates the nucleus localization and increases interaction with PCNA.

It localises to the cytoplasm. The protein resides in the nucleus. Its subcellular location is the endosome. Its pathway is protein modification; protein ubiquitination. Functionally, substrate-specific adapter of a BCR (BTB-CUL3-RBX1) E3 ubiquitin-protein ligase complex involved in regulation of cytoskeleton structure. The BCR(TNFAIP1) E3 ubiquitin ligase complex mediates the ubiquitination of RHOA, leading to its degradation by the proteasome, thereby regulating the actin cytoskeleton and cell migration. Its interaction with RHOB may regulate apoptosis. May enhance the PCNA-dependent DNA polymerase delta activity. The protein is BTB/POZ domain-containing adapter for CUL3-mediated RhoA degradation protein 2 (Tnfaip1) of Mus musculus (Mouse).